The sequence spans 236 residues: Envelope glycoprotein (236 aa).

The Lumenal segment spans residues 1-202 (CQFDGNTISG…EWILGVLNGN (202 aa)). Residue Asn-25 is glycosylated (N-linked (GlcNAc...) asparagine; by host). Disulfide bonds link Cys-67–Cys-97, Cys-90–Cys-142, Cys-107–Cys-112, Cys-143–Cys-148, and Cys-182–Cys-186. A helical transmembrane segment spans residues 203–223 (WMVVAVLIALLILSILLFTLC). Binding to the ribonucleoprotein regions lie at residues 219–231 (LFTLCCPRRPSYR) and 219–236 (LFTLCCPRRPSYRKEHKP). At 224-236 (CPRRPSYRKEHKP) the chain is on the cytoplasmic side.

Belongs to the hantavirus envelope glycoprotein family. As to quaternary structure, homodimer. Homotetramer; forms heterotetrameric Gn-Gc spikes in the pre-fusion conformation. Homotrimer; forms homotrimer in the post-fusion conformation at acidic pH. Interacts (via C-terminus) with the nucleoprotein. In terms of processing, envelope polyprotein precursor is quickly cleaved in vivo just after synthesis, presumably by host signal peptidase.

The protein resides in the virion membrane. The protein localises to the host cell surface. It localises to the host Golgi apparatus membrane. It is found in the host endoplasmic reticulum membrane. Its function is as follows. Forms homotetramers with glycoprotein N at the surface of the virion. Attaches the virion to host cell receptors including integrin ITGAV/ITGB3. This attachment induces virion internalization predominantly through clathrin-dependent endocytosis. Class II fusion protein that promotes fusion of viral membrane with host endosomal membrane after endocytosis of the virion. The protein is Envelope glycoprotein (GP) of Homo sapiens (Human).